A 458-amino-acid polypeptide reads, in one-letter code: MSQSSASSIFTVSRLNQTVRQLLEMEMGQIWLTAEISNFSQPSSGHWYFTLKDDRAQVRCAMFRNTNRRTTFRPQNGQQVLVRASITLYEPRGDYQLIAESMQPAGDGLLQQQFEQLKQQLAAEGLFDQSHKQPLPSPAKQVGVITSSSGAALHDVLQVLQRRDPSLPVIIYPTAVQGADAPLQIVRAIQLANLRGECDVLIVGRGGGSLEDLWSFNDERVARAIFNSRIPIVSAVGHETDVTIADFVADLRAPTPSAAAELVSRNQIELVRQIQGQQQRMEMAMDYYLAQRHQQLTRLEHRLQQQHPHLRLARQQTLLLKLQRRLEDSAQNQIRRLSRRTERLQQRLVQAQPQGQIHRYNQRVQQQEYRLRQALERQLNGYRQRFGIACSQLEAVSPLATLARGYSVTQTPEGSLLKTTKQVHTGDKLTTRLQDGWVESEITQIKVAKKPRQRKAAN.

This sequence belongs to the XseA family. In terms of assembly, heterooligomer composed of large and small subunits.

The protein localises to the cytoplasm. It catalyses the reaction Exonucleolytic cleavage in either 5'- to 3'- or 3'- to 5'-direction to yield nucleoside 5'-phosphates.. Its function is as follows. Bidirectionally degrades single-stranded DNA into large acid-insoluble oligonucleotides, which are then degraded further into small acid-soluble oligonucleotides. In Yersinia enterocolitica serotype O:8 / biotype 1B (strain NCTC 13174 / 8081), this protein is Exodeoxyribonuclease 7 large subunit.